The chain runs to 162 residues: Large ribosomal subunit protein uL30 (162 aa).

Belongs to the universal ribosomal protein uL30 family. As to quaternary structure, part of the 50S ribosomal subunit.

The polypeptide is Large ribosomal subunit protein uL30 (Staphylothermus marinus (strain ATCC 43588 / DSM 3639 / JCM 9404 / F1)).